Reading from the N-terminus, the 1403-residue chain is MNHEVMNLFNPQAPAQTFDSIRISIASPEKILSWSYGEIKKPETINYRTFKPERDGLFCARIFGPIKDYECLCGKYKRMKYKGIICEKCGVEVTLSRVRRERMGHIELAAPVAHIWFLKSLPGRISTLLDLTLKDIERVLYFENYIVTEPGLTSLKLHQLLSEEEYMLAIDEFGEDQFTAMIGAEAIYELLAGMELDKIANDLRLELAETTSELKQKKLIKRLKIVENFLESGNKPEWMIMKTIPVIPPDLRPLVPLDGGRFATSDLNDLYRRVINRNNRLKRLIELRAPGIIVRNEKRMVQEAVDALFDNGRRGRVITGANKRPLKSLSDMLKGKQGRFRQNLLGKRVDYSGRSVIVTGPELKLHQCGLPKKMALELFKPFIYARLDAKGYSSTVKQAKKLVEKEHPEVWDILDEVIREHPVLLNRAPTLHRLGIQAFEPILIEGKAIQLHPLVCTAFNADFDGDQMAVHVPLSLEAQLEARVLMMSTNNILHPANGAPIIVPSQDMVLGLYYLSIVSEKEPGEGMAFSDIGELHYALENKVVTLHTKIKGRVKNMGKDGKEVAKLYDTTPGRLIIGELLPRNPNISFDIVNQEMTKKNISKMIDYVYRHCGQKETVIFCDRIMQLGFSYACRAGISFGKDDMVIPDSKSRLVAETEALAKEYEQQYNDGLITQGEKYNKVVDAWGKCTDRVADEMMKRIQAVDFDPKTGRQRPMNSIYMMSHSGARGSANQMRQLAGMRGLMAKPSGEIIETPIISNFKEGLTVNEYFNSTHGARKGLADTALKTANSGYLTRRLVDVAQDAIISAVDCGTAKGLTMQPIVDAGQIVASLGQRILGRTALVDILHPVSGEVILEGGAMIEEADVAKIEEAGIQSVQIRSALTCETRLGVCAKCYGRDLARGTPVNQGEAVGVIAAQSIGEPGTQLTMRTFHLGGTAQVVDSSYLEASYEGTVEIRNRNVARNSEGHLVVMGRNMAILIKDELGKERVVHRISYGAHIFVDDGDVVKRGQRIAEWDPYTRPILTEVEGYVGFEDMVDGLSVTETADESTGITKRLVIDWRANPRGAELKPAIIIHADKEGKSIAKLYKGGEARYMMSVETILSVELGAHVKAGDVIARLPMESAKTKDITGGLPRVAELFEARRPKDHAIIAEVSGTIRFGRGYKNKRRIIIEPNDETLEPVEYLIPKGKLFHFQEGDQIEKGDYILDGNPAPHDILAIKGVEALASYLVNEIQEVYRLQGVLINDKHIEVIVRQMLQKVEITESGDSGYIPGDNVDRIELDEINDNLIAEGKKPASGNPILLGITKASLQTPSFISAASFQETTRVLTEAAVSGKIDTLQGLKENVIVGRLIPAGTGGTISQIRRIAAVRDDLIVDEQRKSSNNEVAKAMLTNMTAESVSK.

Zn(2+) contacts are provided by C71, C73, C86, and C89. 3 residues coordinate Mg(2+): D462, D464, and D466. Zn(2+)-binding residues include C811, C885, C892, and C895.

Belongs to the RNA polymerase beta' chain family. The RNAP catalytic core consists of 2 alpha, 1 beta, 1 beta' and 1 omega subunit. When a sigma factor is associated with the core the holoenzyme is formed, which can initiate transcription. It depends on Mg(2+) as a cofactor. Requires Zn(2+) as cofactor.

The enzyme catalyses RNA(n) + a ribonucleoside 5'-triphosphate = RNA(n+1) + diphosphate. In terms of biological role, DNA-dependent RNA polymerase catalyzes the transcription of DNA into RNA using the four ribonucleoside triphosphates as substrates. In Bartonella tribocorum (strain CIP 105476 / IBS 506), this protein is DNA-directed RNA polymerase subunit beta'.